Here is a 1048-residue protein sequence, read N- to C-terminus: Dyslexia-associated protein KIAA0319-like protein (1048 aa).

At 1–29 (MEKRLGVKPSPASWVLPGYCWQTSVKLPR) the chain is on the cytoplasmic side. Residues 30–50 (SLYLLYSFFCFSVLWLSTDAD) traverse the membrane as a helical segment. The MANSC domain maps to 49–127 (ADESRCQQGK…PFRTDSSNSM (79 aa)). Topologically, residues 51–928 (ESRCQQGKTL…RDGDSNCEWS (878 aa)) are extracellular. Disordered regions lie at residues 198–218 (HGAMQHSKVNHSEEAGALSPT) and 231–300 (SFTS…STSA). Over residues 231-241 (SFTSNHTTQTP) the composition is skewed to polar residues. Residue N246 is glycosylated (N-linked (GlcNAc...) asparagine). Composition is skewed to low complexity over residues 247 to 261 (VSIHPEPSEHSSPVS) and 287 to 300 (ATPTPQASSQSTSA). PKD domains lie at 309–400 (VVSA…VKPE), 408–497 (VAVV…VNKA), 503–593 (VANA…VQPE), 599–687 (QADA…VKEE), and 693–784 (VAKI…VKPD). A glycan (N-linked (GlcNAc...) asparagine) is linked at N394. The segment at 593–623 (ENNKPPQADAGPDKELTLPVDSTTLDGSKST) is disordered. The helical transmembrane segment at 929 to 949 (VLYVIIASFVIVVALGILSWT) threads the bilayer. Over 950–1048 (TICCCKRQKG…KSRSAREEIL (99 aa)) the chain is Cytoplasmic. Position 973 is a phosphothreonine (T973). S977 is subject to Phosphoserine. The tract at residues 980 to 1007 (LKPTSRAGSKQKGPTLSSSLMHSESELD) is disordered. Residues 985–994 (RAGSKQKGPT) show a composition bias toward polar residues. A phosphoserine mark is found at S1008 and S1030. The segment at 1024–1048 (LYGQNGSVPNGQTPLKSRSAREEIL) is disordered. The segment covering 1027–1039 (QNGSVPNGQTPLK) has biased composition (polar residues). Position 1036 is a phosphothreonine (T1036).

As to quaternary structure, interacts with RTN4R. N-glycosylated.

The protein localises to the cytoplasmic granule membrane. It localises to the golgi apparatus membrane. The protein resides in the golgi apparatus. Its subcellular location is the trans-Golgi network membrane. It is found in the cell membrane. Functionally, possible role in axon guidance through interaction with RTN4R. Its function is as follows. (Microbial infection) Acts as a receptor for adeno-associated virus and is involved in adeno-associated virus infection through endocytosis system. The chain is Dyslexia-associated protein KIAA0319-like protein from Mus musculus (Mouse).